A 943-amino-acid chain; its full sequence is Protein translocase subunit SecA (943 aa).

Residues Q90, 108 to 112 (GEGKT), and D509 each bind ATP. Residues 534-576 (KPDNEHKPPIPQQRSSKAGGGFASKSESISNKNSKSSGASLFP) are disordered. A compositionally biased stretch (low complexity) spans 556–570 (ASKSESISNKNSKSS).

It belongs to the SecA family. As to quaternary structure, monomer and homodimer. Part of the essential Sec protein translocation apparatus which comprises SecA, SecYEG and auxiliary proteins SecDF. Other proteins may also be involved.

It localises to the cell inner membrane. It is found in the cellular thylakoid membrane. The protein localises to the cytoplasm. The enzyme catalyses ATP + H2O + cellular proteinSide 1 = ADP + phosphate + cellular proteinSide 2.. Part of the Sec protein translocase complex. Interacts with the SecYEG preprotein conducting channel. Has a central role in coupling the hydrolysis of ATP to the transfer of proteins into and across the cell membrane, serving as an ATP-driven molecular motor driving the stepwise translocation of polypeptide chains across the membrane. In terms of biological role, probably participates in protein translocation into and across both the cytoplasmic and thylakoid membranes in cyanobacterial cells. In Prochlorococcus marinus (strain MIT 9515), this protein is Protein translocase subunit SecA.